Consider the following 204-residue polypeptide: Protein OPG030 (204 aa).

Positions 95–177 constitute a BACK domain; the sequence is FLRQYINNNI…ITYSELTNAI (83 aa).

The protein belongs to the orthopoxvirus OPG030 family.

The protein is Protein OPG030 (OPG30) of Bos taurus (Bovine).